We begin with the raw amino-acid sequence, 366 residues long: Alanine racemase (366 aa).

Residue K33 is the Proton acceptor; specific for D-alanine of the active site. K33 carries the post-translational modification N6-(pyridoxal phosphate)lysine. Position 129 (R129) interacts with substrate. Y253 functions as the Proton acceptor; specific for L-alanine in the catalytic mechanism. Residue M301 participates in substrate binding.

Belongs to the alanine racemase family. Pyridoxal 5'-phosphate is required as a cofactor.

The catalysed reaction is L-alanine = D-alanine. It participates in amino-acid biosynthesis; D-alanine biosynthesis; D-alanine from L-alanine: step 1/1. Functionally, catalyzes the interconversion of L-alanine and D-alanine. May also act on other amino acids. This is Alanine racemase (alr) from Xanthomonas oryzae pv. oryzae (strain KACC10331 / KXO85).